We begin with the raw amino-acid sequence, 1295 residues long: Phosphoribosylformylglycinamidine synthase (1295 aa).

The interval 305-327 is disordered; that stretch reads WPGAATGSGGEIRDEGATGRGAK. Residues 307-318, 386-388, and A678 contribute to the ATP site; these read GAATGSGGEIRD and TGY. 4 residues coordinate Mg(2+): D679, E718, N722, and D884. ATP is bound at residue S886. Positions 1041–1295 constitute a Glutamine amidotransferase type-1 domain; sequence KVAVLREQGG…IFRNARKQLG (255 aa). C1135 acts as the Nucleophile in catalysis. Active-site residues include H1260 and E1262.

The protein in the N-terminal section; belongs to the FGAMS family. In terms of assembly, monomer.

It localises to the cytoplasm. The enzyme catalyses N(2)-formyl-N(1)-(5-phospho-beta-D-ribosyl)glycinamide + L-glutamine + ATP + H2O = 2-formamido-N(1)-(5-O-phospho-beta-D-ribosyl)acetamidine + L-glutamate + ADP + phosphate + H(+). Its pathway is purine metabolism; IMP biosynthesis via de novo pathway; 5-amino-1-(5-phospho-D-ribosyl)imidazole from N(2)-formyl-N(1)-(5-phospho-D-ribosyl)glycinamide: step 1/2. Phosphoribosylformylglycinamidine synthase involved in the purines biosynthetic pathway. Catalyzes the ATP-dependent conversion of formylglycinamide ribonucleotide (FGAR) and glutamine to yield formylglycinamidine ribonucleotide (FGAM) and glutamate. The protein is Phosphoribosylformylglycinamidine synthase of Salmonella choleraesuis (strain SC-B67).